The following is a 328-amino-acid chain: Tetraacyldisaccharide 4'-kinase (328 aa).

55-62 (TAGGNGKT) is a binding site for ATP.

The protein belongs to the LpxK family.

The catalysed reaction is a lipid A disaccharide + ATP = a lipid IVA + ADP + H(+). It functions in the pathway glycolipid biosynthesis; lipid IV(A) biosynthesis; lipid IV(A) from (3R)-3-hydroxytetradecanoyl-[acyl-carrier-protein] and UDP-N-acetyl-alpha-D-glucosamine: step 6/6. In terms of biological role, transfers the gamma-phosphate of ATP to the 4'-position of a tetraacyldisaccharide 1-phosphate intermediate (termed DS-1-P) to form tetraacyldisaccharide 1,4'-bis-phosphate (lipid IVA). This Yersinia pseudotuberculosis serotype I (strain IP32953) protein is Tetraacyldisaccharide 4'-kinase.